The following is a 348-amino-acid chain: Ion-translocating oxidoreductase complex subunit D (348 aa).

5 helical membrane passes run L15–A35, Y36–I56, L67–S87, I88–A108, and V125–I145. At T186 the chain carries FMN phosphoryl threonine. 5 consecutive transmembrane segments (helical) span residues L212–I232, I241–P261, L265–T285, L298–P318, and A320–Q340.

The protein belongs to the NqrB/RnfD family. In terms of assembly, the complex is composed of six subunits: RnfA, RnfB, RnfC, RnfD, RnfE and RnfG. FMN serves as cofactor.

Its subcellular location is the cell inner membrane. Functionally, part of a membrane-bound complex that couples electron transfer with translocation of ions across the membrane. The polypeptide is Ion-translocating oxidoreductase complex subunit D (Actinobacillus pleuropneumoniae serotype 3 (strain JL03)).